The sequence spans 326 residues: Lipoyl synthase (326 aa).

Residues Cys74, Cys79, Cys85, Cys100, Cys104, Cys107, and Ser314 each coordinate [4Fe-4S] cluster. Positions 85–303 constitute a Radical SAM core domain; that stretch reads CFGRGTATFM…EEEAYKMGFS (219 aa).

Belongs to the radical SAM superfamily. Lipoyl synthase family. The cofactor is [4Fe-4S] cluster.

The protein resides in the cytoplasm. The catalysed reaction is [[Fe-S] cluster scaffold protein carrying a second [4Fe-4S](2+) cluster] + N(6)-octanoyl-L-lysyl-[protein] + 2 oxidized [2Fe-2S]-[ferredoxin] + 2 S-adenosyl-L-methionine + 4 H(+) = [[Fe-S] cluster scaffold protein] + N(6)-[(R)-dihydrolipoyl]-L-lysyl-[protein] + 4 Fe(3+) + 2 hydrogen sulfide + 2 5'-deoxyadenosine + 2 L-methionine + 2 reduced [2Fe-2S]-[ferredoxin]. The protein operates within protein modification; protein lipoylation via endogenous pathway; protein N(6)-(lipoyl)lysine from octanoyl-[acyl-carrier-protein]: step 2/2. In terms of biological role, catalyzes the radical-mediated insertion of two sulfur atoms into the C-6 and C-8 positions of the octanoyl moiety bound to the lipoyl domains of lipoate-dependent enzymes, thereby converting the octanoylated domains into lipoylated derivatives. This chain is Lipoyl synthase, found in Acidovorax ebreus (strain TPSY) (Diaphorobacter sp. (strain TPSY)).